The primary structure comprises 73 residues: UPF0154 protein PEPE_0872 (73 aa).

A helical membrane pass occupies residues 5–25 (IWIMIVIIALLVGAVGGFFFA).

Belongs to the UPF0154 family.

The protein resides in the cell membrane. The chain is UPF0154 protein PEPE_0872 from Pediococcus pentosaceus (strain ATCC 25745 / CCUG 21536 / LMG 10740 / 183-1w).